A 257-amino-acid chain; its full sequence is Leucine-rich repeat-containing protein 3 (257 aa).

The signal sequence occupies residues 1 to 32; sequence MGPRGRQSPSSPLAPSQGSCFFILFCLRLGAS. Residues 33 to 64 enclose the LRRNT domain; it reads CPQSCQCPDHAGAVAVHCSSRGLQEIPRDIPA. LRR repeat units lie at residues 65 to 86, 89 to 110, and 114 to 135; these read NTVL…AFQH, QLRE…AFSG, and GLRL…ALGK. The LRRCT domain occupies 145 to 198; that stretch reads NPLHCECALQEALWELKLDPDSVDEIACHTSAQEQFVGKPLIQVLDSGASFCST. The chain crosses the membrane as a helical span at residues 205-225; that stretch reads VAMLVTMFGWFTMVIAYVVYY.

The protein belongs to the LRRC3 family.

It localises to the membrane. This chain is Leucine-rich repeat-containing protein 3 (Lrrc3), found in Rattus norvegicus (Rat).